Consider the following 401-residue polypeptide: Argininosuccinate synthase (401 aa).

9–17 is a binding site for ATP; it reads AYSGGLDTS. Tyr-88 contacts L-citrulline. Gly-118 lines the ATP pocket. 3 residues coordinate L-aspartate: Thr-120, Asn-124, and Asp-125. Asn-124 contributes to the L-citrulline binding site. Residues Arg-128, Ser-177, Ser-186, Glu-262, and Tyr-274 each contribute to the L-citrulline site.

Belongs to the argininosuccinate synthase family. Type 1 subfamily. Homotetramer.

It is found in the cytoplasm. It carries out the reaction L-citrulline + L-aspartate + ATP = 2-(N(omega)-L-arginino)succinate + AMP + diphosphate + H(+). Its pathway is amino-acid biosynthesis; L-arginine biosynthesis; L-arginine from L-ornithine and carbamoyl phosphate: step 2/3. This Chlorobaculum parvum (strain DSM 263 / NCIMB 8327) (Chlorobium vibrioforme subsp. thiosulfatophilum) protein is Argininosuccinate synthase.